Reading from the N-terminus, the 542-residue chain is 2,3-bisphosphoglycerate-independent phosphoglycerate mutase (542 aa).

Residues Asp24 and Ser74 each contribute to the Mn(2+) site. The Phosphoserine intermediate role is filled by Ser74. Substrate contacts are provided by residues His135, 165–166 (RD), Arg197, Arg203, 268–271 (RPDR), and Lys341. Mn(2+) contacts are provided by Asp408, His412, Asp449, His450, and His467.

This sequence belongs to the BPG-independent phosphoglycerate mutase family. In terms of assembly, monomer. The cofactor is Mn(2+).

The enzyme catalyses (2R)-2-phosphoglycerate = (2R)-3-phosphoglycerate. The protein operates within carbohydrate degradation; glycolysis; pyruvate from D-glyceraldehyde 3-phosphate: step 3/5. In terms of biological role, catalyzes the interconversion of 2-phosphoglycerate and 3-phosphoglycerate. In Prochlorococcus marinus (strain NATL1A), this protein is 2,3-bisphosphoglycerate-independent phosphoglycerate mutase.